We begin with the raw amino-acid sequence, 71 residues long: Keratin-associated protein 6-1 (71 aa).

The protein belongs to the KRTAP type 6 family. In terms of assembly, interacts with hair keratins.

Its function is as follows. In the hair cortex, hair keratin intermediate filaments are embedded in an interfilamentous matrix, consisting of hair keratin-associated proteins (KRTAP), which are essential for the formation of a rigid and resistant hair shaft through their extensive disulfide bond cross-linking with abundant cysteine residues of hair keratins. The matrix proteins include the high-sulfur and high-glycine-tyrosine keratins. The polypeptide is Keratin-associated protein 6-1 (KRTAP6-1) (Homo sapiens (Human)).